The primary structure comprises 234 residues: Purine nucleoside phosphorylase DeoD-type (234 aa).

His5 is a binding site for a purine D-ribonucleoside. Phosphate-binding positions include Gly21, Arg25, Arg44, and Arg88–Ser91. A purine D-ribonucleoside-binding positions include Glu180–Glu182 and Ser204–Asp205. Asp205 acts as the Proton donor in catalysis.

This sequence belongs to the PNP/UDP phosphorylase family. As to quaternary structure, homohexamer; trimer of homodimers.

The enzyme catalyses a purine D-ribonucleoside + phosphate = a purine nucleobase + alpha-D-ribose 1-phosphate. The catalysed reaction is a purine 2'-deoxy-D-ribonucleoside + phosphate = a purine nucleobase + 2-deoxy-alpha-D-ribose 1-phosphate. In terms of biological role, catalyzes the reversible phosphorolytic breakdown of the N-glycosidic bond in the beta-(deoxy)ribonucleoside molecules, with the formation of the corresponding free purine bases and pentose-1-phosphate. The chain is Purine nucleoside phosphorylase DeoD-type from Colwellia psychrerythraea (strain 34H / ATCC BAA-681) (Vibrio psychroerythus).